We begin with the raw amino-acid sequence, 284 residues long: MEGLGGNVPSNQCRNFLSPSAFGAHHNSLSSGPAYTVGDRTHSVISESAKQCSPCPAPTSPPNPAISYGYHFGSSYYSCRNVGIQQTGLKSGAHASLAGYPVDKYMDVSSLTNTPVPTDEVSARAKEFAFYQSYPNPYQRVSGYLDVPVVPTISGHGEPRHEALISMEGYQPWTFANSWNGQVYCPKDQTQTPHFWKSPLSGDVMHNQTDINIYRRGRKKRVPYTKTQLKELEREYATNKFITKEKRRRISTATNLTERQVTIWFQNRRVKEKKVVSKVKENIP.

The segment at residues 217 to 276 (GRKKRVPYTKTQLKELEREYATNKFITKEKRRRISTATNLTERQVTIWFQNRRVKEKKVV) is a DNA-binding region (homeobox).

The protein belongs to the Abd-B homeobox family.

It is found in the nucleus. Its function is as follows. Sequence-specific transcription factor that binds gene promoters and activates their transcription. Part of a developmental regulatory system that provides cells with specific positional identities on the anterior-posterior axis. The chain is Homeobox protein Hox-D13 (HOXD13) from Heterodontus francisci (Horn shark).